The sequence spans 226 residues: Ribonuclease 3 (226 aa).

The RNase III domain occupies 6-128 (INRLQRKLGY…LIGGVFLDSD (123 aa)). Position 41 (Glu41) interacts with Mg(2+). Asp45 is an active-site residue. 2 residues coordinate Mg(2+): Asp114 and Glu117. Glu117 is a catalytic residue. Positions 155–225 (DPKTRLQEYL…AEQALKKLEL (71 aa)) constitute a DRBM domain.

The protein belongs to the ribonuclease III family. As to quaternary structure, homodimer. Mg(2+) is required as a cofactor.

It is found in the cytoplasm. It catalyses the reaction Endonucleolytic cleavage to 5'-phosphomonoester.. Functionally, digests double-stranded RNA. Involved in the processing of primary rRNA transcript to yield the immediate precursors to the large and small rRNAs (23S and 16S). Processes some mRNAs, and tRNAs when they are encoded in the rRNA operon. Processes pre-crRNA and tracrRNA of type II CRISPR loci if present in the organism. The polypeptide is Ribonuclease 3 (Klebsiella pneumoniae (strain 342)).